We begin with the raw amino-acid sequence, 175 residues long: B9 domain-containing protein 2 (175 aa).

One can recognise a C2 B9-type domain in the interval 2-118 (AEVHVIGQII…DCPTWRPLGS (117 aa)).

The protein belongs to the B9D family. Part of the tectonic-like complex (also named B9 complex). Interacts with TUBG1.

It localises to the cytoplasm. It is found in the cytoskeleton. Its subcellular location is the cilium basal body. The protein localises to the cilium axoneme. The protein resides in the nucleus. Functionally, component of the tectonic-like complex, a complex localized at the transition zone of primary cilia and acting as a barrier that prevents diffusion of transmembrane proteins between the cilia and plasma membranes. In Rattus norvegicus (Rat), this protein is B9 domain-containing protein 2 (B9d2).